The sequence spans 294 residues: NAD kinase (294 aa).

Asp-73 acts as the Proton acceptor in catalysis. Residues 73-74 (DG), 147-148 (NE), His-158, Arg-175, Asp-177, 188-193 (TAYSLS), and Gln-249 contribute to the NAD(+) site.

Belongs to the NAD kinase family. It depends on a divalent metal cation as a cofactor.

The protein resides in the cytoplasm. It carries out the reaction NAD(+) + ATP = ADP + NADP(+) + H(+). Involved in the regulation of the intracellular balance of NAD and NADP, and is a key enzyme in the biosynthesis of NADP. Catalyzes specifically the phosphorylation on 2'-hydroxyl of the adenosine moiety of NAD to yield NADP. This chain is NAD kinase, found in Aeromonas salmonicida (strain A449).